The sequence spans 220 residues: Probable septum site-determining protein MinC (220 aa).

Belongs to the MinC family. As to quaternary structure, interacts with MinD and FtsZ.

Functionally, cell division inhibitor that blocks the formation of polar Z ring septums. Rapidly oscillates between the poles of the cell to destabilize FtsZ filaments that have formed before they mature into polar Z rings. Prevents FtsZ polymerization. This Vibrio atlanticus (strain LGP32) (Vibrio splendidus (strain Mel32)) protein is Probable septum site-determining protein MinC.